A 180-amino-acid chain; its full sequence is Large ribosomal subunit protein uL6 (180 aa).

The protein belongs to the universal ribosomal protein uL6 family. In terms of assembly, part of the 50S ribosomal subunit.

Functionally, this protein binds to the 23S rRNA, and is important in its secondary structure. It is located near the subunit interface in the base of the L7/L12 stalk, and near the tRNA binding site of the peptidyltransferase center. This chain is Large ribosomal subunit protein uL6, found in Clostridium botulinum (strain Alaska E43 / Type E3).